A 159-amino-acid chain; its full sequence is tRNA-specific adenosine deaminase (159 aa).

The region spanning 6–133 is the CMP/dCMP-type deaminase domain; that stretch reads EEQTYFMQEA…ERLNHRVQVE (128 aa). Position 57 (H57) interacts with Zn(2+). E59 functions as the Proton donor in the catalytic mechanism. Zn(2+) is bound by residues C87 and C90.

Belongs to the cytidine and deoxycytidylate deaminase family. Homodimer. The cofactor is Zn(2+).

It carries out the reaction adenosine(34) in tRNA + H2O + H(+) = inosine(34) in tRNA + NH4(+). Catalyzes the deamination of adenosine to inosine at the wobble position 34 of tRNA(Arg2). The sequence is that of tRNA-specific adenosine deaminase from Streptococcus pyogenes serotype M18 (strain MGAS8232).